The primary structure comprises 405 residues: Tyrosine--tRNA ligase (405 aa).

Tyrosine 35 contacts L-tyrosine. Positions 40–49 (TTSSSLHIGH) match the 'HIGH' region motif. The L-tyrosine site is built by tyrosine 166 and glutamine 170. The short motif at 226–230 (KMGKS) is the 'KMSKS' region element. Lysine 229 serves as a coordination point for ATP. In terms of domain architecture, S4 RNA-binding spans 340–404 (ILLIDLMLDS…VGKKKFLRIV (65 aa)).

It belongs to the class-I aminoacyl-tRNA synthetase family. TyrS type 1 subfamily. In terms of assembly, homodimer.

The protein resides in the cytoplasm. The enzyme catalyses tRNA(Tyr) + L-tyrosine + ATP = L-tyrosyl-tRNA(Tyr) + AMP + diphosphate + H(+). Catalyzes the attachment of tyrosine to tRNA(Tyr) in a two-step reaction: tyrosine is first activated by ATP to form Tyr-AMP and then transferred to the acceptor end of tRNA(Tyr). The sequence is that of Tyrosine--tRNA ligase from Borrelia garinii subsp. bavariensis (strain ATCC BAA-2496 / DSM 23469 / PBi) (Borreliella bavariensis).